A 135-amino-acid chain; its full sequence is Histone H2A (135 aa).

It belongs to the histone H2A family. In terms of assembly, the nucleosome is a histone octamer containing two molecules each of H2A, H2B, H3 and H4 assembled in one H3-H4 heterotetramer and two H2A-H2B heterodimers. The octamer wraps approximately 147 bp of DNA.

It is found in the nucleus. It localises to the chromosome. In terms of biological role, core component of nucleosome. Nucleosomes wrap and compact DNA into chromatin, limiting DNA accessibility to the cellular machineries which require DNA as a template. Histones thereby play a central role in transcription regulation, DNA repair, DNA replication and chromosomal stability. DNA accessibility is regulated via a complex set of post-translational modifications of histones, also called histone code, and nucleosome remodeling. This chain is Histone H2A, found in Trypanosoma cruzi.